We begin with the raw amino-acid sequence, 333 residues long: Trans-enoyl reductase apdC (333 aa).

45–48 (FDAK) provides a ligand contact to NADP(+). A substrate-binding site is contributed by 131–138 (VGLATVGM). Residues 167–170 (SPHN), Y185, and 232–233 (LD) each bind NADP(+). 252-256 (SVTMY) is a binding site for substrate. 321–322 (VS) serves as a coordination point for NADP(+).

It belongs to the zinc-containing alcohol dehydrogenase family. Monomer.

Its pathway is secondary metabolite biosynthesis. Functionally, trans-enoyl reductase; part of the gene cluster that mediates the biosynthesis of aspyridones. The polyketide-amino acid backbone preaspyridone A is first assembled by the PKS-NRPS hybrid apdA. The assembly of preaspyridone A is initiated by loading of malonyl-CoA onto apdA, followed by decarboxylation to yield the acetyl starter unit. The growing polyketide chain then elongates into a tetraketide. The adpA PKS module catalyzes three Claisen condensations, as well as beta-keto processing and methylation. Alpha-methylation step during polyketide synthesis is a prerequisite and a key checkpoint for chain transfer between PKS and NRPS modules. The downstream NRPS module contains the condensation (C), adenylation (A), and thiolation (T) domains and catalyzes the incorporation of tyrosine via the formation of the L-tyrosinyl-thioester and the amide linkage between L-tyrosinyl-thioester and the tetraketide. The bimodular assembly line is terminated with a reductase (R) domain that facilitates formation and release of the tetramic acid product. Because apdA lacks a designated enoylreductase (ER) domain, the required activity is provided the enoyl reductase apdC. ApdC appears to operate with different stereoselectivity in different PKS cycle. Combined with apdC, apdA is proposed to synthesize preaspyridone A via about 20 enzymatic steps. A number of oxidative steps performed successively by the cytochrome P450 monooxygenases apdE and apdB are required for the conversion of preaspyridone A to aspyridone A. The cytochrome P450 monooxygenase apdE is responsible for the oxidative dephenylation of preaspyridone A. Finally, the predicted FAD-dependent monooxygenase apdD and the acyl-CoA dehydrogenase apdG may be involved in the transformation of aspyridone A into aspyridone B. The sequence is that of Trans-enoyl reductase apdC from Emericella nidulans (strain FGSC A4 / ATCC 38163 / CBS 112.46 / NRRL 194 / M139) (Aspergillus nidulans).